The sequence spans 342 residues: Prenyl transferase ptmC (342 aa).

A helical transmembrane segment spans residues 17-37 (LSFLTLTVGALALIVVLYISI). Histidine 110 contacts isopentenyl diphosphate. Mg(2+)-binding residues include aspartate 117 and aspartate 121. Dimethylallyl diphosphate is bound at residue arginine 126. N-linked (GlcNAc...) asparagine glycosylation occurs at asparagine 154. The dimethylallyl diphosphate site is built by lysine 210, threonine 211, glutamine 240, asparagine 247, and lysine 257.

The protein belongs to the FPP/GGPP synthase family.

The protein resides in the membrane. The protein operates within secondary metabolite biosynthesis. Functionally, prenyl transferase; part of the gene cluster that mediates the biosynthesis of the indole diterpenes penitrems. The geranylgeranyl diphosphate (GGPP) synthase ptmG catalyzes the first step in penitrem biosynthesis via conversion of farnesyl pyrophosphate and isopentyl pyrophosphate into geranylgeranyl pyrophosphate (GGPP). Condensation of indole-3-glycerol phosphate with GGPP by the prenyl transferase ptmC then forms 3-geranylgeranylindole (3-GGI). Epoxidation by the FAD-dependent monooxygenase ptmM leads to a epoxidized-GGI that is substrate of the terpene cyclase ptmB for cyclization to yield paspaline. Paspaline is subsequently converted to 13-desoxypaxilline by the cytochrome P450 monooxygenase ptmP, the latter being then converted to paxilline by the cytochrome P450 monooxygenase ptmQ. Paxilline is converted to beta-paxitriol via C-10 ketoreduction by the short-chain dehydrogenase ptmH which can be monoprenylated at the C-20 by the indole diterpene prenyltransferase ptmD. A two-step elimination (acetylation and elimination) process performed by the O-acetyltransferase ptmV and ptmI leads to the production of the prenylated form of penijanthine. The FAD-linked oxidoreductase ptmO then converts the prenylated form of penijanthine into PC-M5 which is in turn transformed into PC-M4 by the aromatic dimethylallyltransferase ptmE. Five sequential oxidative transformations performed by the cytochrome P450 monooxygenases ptmK, ptmU, ptmL, ptmN and ptmJ yield the various penitrem compounds. PtmK, ptmU and ptmM are involved in the formation of the key bicyclic ring of penitrem C via the formation of the intermediates secopenitrem D and penitrem D. PtmL catalyzes the epoxidation of penitrem D and C to yield penitrem B and F, respectively. PtmJ catalyzes the last benzylic hydroxylation to convert penitrem B to prenitrem E and penitrem F to penitrem A. In Penicillium ochrochloron, this protein is Prenyl transferase ptmC.